Here is a 266-residue protein sequence, read N- to C-terminus: Interleukin-1 beta (266 aa).

A propeptide spanning residues 1–113 is cleaved from the precursor; that stretch reads MATVPEPINE…ETSSDELLCD (113 aa).

Belongs to the IL-1 family. As to quaternary structure, monomer. In its precursor form, weakly interacts with full-length MEFV; the mature cytokine does not interact at all. Interacts with integrins ITGAV:ITGBV and ITGA5:ITGB1; integrin-binding is required for IL1B signaling. Interacts with cargo receptor TMED10; the interaction is direct and is required for the secretion of IL1B mature form. Interacts with HSP90AB1; the interaction facilitates cargo translocation into the ERGIC. Interacts with HSP90B1; the interaction facilitates cargo translocation into the ERGIC.

The protein localises to the cytoplasm. Its subcellular location is the cytosol. It is found in the secreted. The protein resides in the lysosome. It localises to the extracellular exosome. Its function is as follows. Potent pro-inflammatory cytokine. Initially discovered as the major endogenous pyrogen, induces prostaglandin synthesis, neutrophil influx and activation, T-cell activation and cytokine production, B-cell activation and antibody production, and fibroblast proliferation and collagen production. Promotes Th17 differentiation of T-cells. Synergizes with IL12/interleukin-12 to induce IFNG synthesis from T-helper 1 (Th1) cells. Plays a role in angiogenesis by inducing VEGF production synergistically with TNF and IL6. Involved in transduction of inflammation downstream of pyroptosis: its mature form is specifically released in the extracellular milieu by passing through the gasdermin-D (GSDMD) pore. This is Interleukin-1 beta (IL1B) from Capra hircus (Goat).